A 340-amino-acid chain; its full sequence is Protein-arginine kinase (340 aa).

Residues 21 to 242 enclose the Phosphagen kinase C-terminal domain; that stretch reads VVLSSRIRLA…EQIIMQERVA (222 aa). ATP is bound by residues 24-28, His-79, Arg-113, 164-168, and 195-200; these read SSRIR, RASVM, and RGIYGE.

It belongs to the ATP:guanido phosphotransferase family.

It catalyses the reaction L-arginyl-[protein] + ATP = N(omega)-phospho-L-arginyl-[protein] + ADP + H(+). Functionally, catalyzes the specific phosphorylation of arginine residues in proteins. This Listeria innocua serovar 6a (strain ATCC BAA-680 / CLIP 11262) protein is Protein-arginine kinase.